Here is a 538-residue protein sequence, read N- to C-terminus: ATP synthase subunit beta, mitochondrial (538 aa).

215-222 serves as a coordination point for ATP; sequence GGAGVGKT.

It belongs to the ATPase alpha/beta chains family. Subunit of the F-type ATPase which has 2 components, CF(1) - the catalytic core - and CF(0) - the membrane proton channel. Interacts (via N-terminus) with lov-1 (via PLAT domain). Expressed in three categories of adult male sensory neurons: tail ray B neurons, HOB hook neuron and head cephalic (CEM) neurons.

It is found in the cell projection. It localises to the cilium. The protein localises to the mitochondrion. Its subcellular location is the mitochondrion inner membrane. It carries out the reaction ATP + H2O + 4 H(+)(in) = ADP + phosphate + 5 H(+)(out). Mitochondrial membrane ATP synthase (F(1)F(0) ATP synthase or Complex V) produces ATP from ADP in the presence of a proton gradient across the membrane which is generated by electron transport complexes of the respiratory chain. F-type ATPases consist of two structural domains, F(1) - containing the extramembraneous catalytic core, and F(0) - containing the membrane proton channel, linked together by a central stalk and a peripheral stalk. During catalysis, ATP synthesis in the catalytic domain of F(1) is coupled via a rotary mechanism of the central stalk subunits to proton translocation. Subunits alpha and beta form the catalytic core in F(1). Rotation of the central stalk against the surrounding subunits leads to hydrolysis of ATP in three separate catalytic sites on the beta subunits. Required during male mating behavior for the response to hermaphrodite contact, acting with lov-1 and pkd-2. May be involved in polycystin signaling. This chain is ATP synthase subunit beta, mitochondrial, found in Caenorhabditis elegans.